We begin with the raw amino-acid sequence, 70 residues long: Protein SlyX homolog (70 aa).

Belongs to the SlyX family.

The chain is Protein SlyX homolog from Shewanella loihica (strain ATCC BAA-1088 / PV-4).